Reading from the N-terminus, the 214-residue chain is Phosphatidylcholine transfer protein (214 aa).

Met-1 is modified (N-acetylmethionine). Residues 1-212 enclose the START domain; it reads MAGPAAHFSD…MVKACQNYHK (212 aa). The a 1,2-diacyl-sn-glycero-3-phosphocholine site is built by Tyr-72 and Arg-78. Phosphoserine is present on Ser-139. Gln-157 contacts a 1,2-diacyl-sn-glycero-3-phosphocholine.

As to quaternary structure, interacts with ACOT13/THEM2.

The protein resides in the cytoplasm. Lipid transfer protein that promotes intermembrane transfer of phosphatidylcholines but no other phospholipids. Binds a single lipid molecule. May play a role in hepatocellular selection and transport of phosphatidylcholines during bile formation. This is Phosphatidylcholine transfer protein (Pctp) from Rattus norvegicus (Rat).